Here is a 757-residue protein sequence, read N- to C-terminus: Zinc finger CCCH domain-containing protein 5 (757 aa).

The segment at 1 to 127 is disordered; that stretch reads MEQANEKEEE…REEEERRWKD (127 aa). The span at 13–35 shows a compositional bias: basic and acidic residues; it reads HEEAAGEKESFEESKEKAAEMSR. Over residues 36 to 50 the composition is skewed to basic residues; that stretch reads KEKRKAMKKLKRKQV. Over residues 51-127 the composition is skewed to basic and acidic residues; that stretch reads RKEIAAKERE…REEEERRWKD (77 aa). The segment at 240 to 268 adopts a C3H1-type 1 zinc-finger fold; the sequence is EQDKAHCPFHLKTGACRFGQRCSRVHFYP. The RRM domain maps to 295–372; sequence YTDEEAELCY…KQVNCEFVNI (78 aa). A C3H1-type 2 zinc finger spans residues 374–404; it reads RWKVAICGEYMKSRLKTCSRGSACNFIHCFR. Positions 441-757 are disordered; the sequence is HESSGSLNDS…EEEIERWRPV (317 aa). A compositionally biased stretch (polar residues) spans 444-455; sequence SGSLNDSISDLS. Residues 487 to 546 are compositionally biased toward basic and acidic residues; it reads YHGDTQDSTREDKLRRHAENCHDGDDSPSRDGSLEREMYKERRYAKDTLHRDSRWSEHSP. Composition is skewed to basic residues over residues 547-557 and 600-609; these read GHRVGRKRIHG and KTHRSSRKHS. 3 stretches are compositionally biased toward basic and acidic residues: residues 610-634, 644-672, and 681-721; these read REGSSADKEEGHEHDRVHTVSDKSH, RSSSRYSHEEDSTESRHHQHKESDKKRSV, and SDKD…ETHK. Positions 722-733 are enriched in basic residues; the sequence is ERRHRHRKRRRT.

The chain is Zinc finger CCCH domain-containing protein 5 from Arabidopsis thaliana (Mouse-ear cress).